The following is a 172-amino-acid chain: Translationally-controlled tumor protein (172 aa).

Residues 1-172 (MIIYRDLISH…FKDGLEMEKC (172 aa)) form the TCTP domain. Residues serine 46 and serine 53 each carry the phosphoserine modification. Phosphoserine; by PLK1 is present on serine 64. The required for reduction of TSC22D1 protein stability stretch occupies residues 70–172 (VDIVMNHHLQ…FKDGLEMEKC (103 aa)).

This sequence belongs to the TCTP family. In terms of assembly, homodimer. Interacts with STEAP3. Interacts with TSC22D1; interaction results in the destabilization of TSC22D1 protein.

It localises to the cytoplasm. Its function is as follows. Involved in calcium binding and microtubule stabilization. Acts as a negative regulator of TSC22D1-mediated apoptosis, via interaction with and destabilization of TSC22D1 protein. The polypeptide is Translationally-controlled tumor protein (Tpt1) (Mus musculus (Mouse)).